Here is a 200-residue protein sequence, read N- to C-terminus: Endochitinase (200 aa).

The Proton donor role is filled by Glu58.

This sequence belongs to the glycosyl hydrolase 19 family. Chitinase class I subfamily.

The enzyme catalyses Random endo-hydrolysis of N-acetyl-beta-D-glucosaminide (1-&gt;4)-beta-linkages in chitin and chitodextrins.. Functionally, this protein functions as a defense against chitin-containing fungal pathogens. The sequence is that of Endochitinase from Avena sativa (Oat).